A 152-amino-acid polypeptide reads, in one-letter code: Transcriptional regulator MraZ (152 aa).

SpoVT-AbrB domains follow at residues 5 to 52 (ATQI…TLSE) and 81 to 124 (ASEC…DEQA).

This sequence belongs to the MraZ family. Forms oligomers.

It localises to the cytoplasm. The protein resides in the nucleoid. Functionally, negatively regulates its own expression and that of the subsequent genes in the proximal part of the division and cell wall (dcw) gene cluster. Acts by binding directly to DNA. May also regulate the expression of genes outside the dcw cluster. This is Transcriptional regulator MraZ from Photorhabdus laumondii subsp. laumondii (strain DSM 15139 / CIP 105565 / TT01) (Photorhabdus luminescens subsp. laumondii).